We begin with the raw amino-acid sequence, 214 residues long: MYKPICGLARDGLPIIGVFALATLVFALLRWPCLATISLLSTIFSFNFFRDPDRTSPTENGIAVSPADGVVCKLGEAADPITGEMRQVVCVFMNVFNVHVNRSPVTGVVSEVRYIPGKFFNASLDKASTDNERNVIVVTDAEGARFTVVQIAGLIARRIVCPAKAGDTLSRGERYGMIKFGSRLDVYLPHGYHPAVAMGQKTMAGVTVLAKKAD.

Serine 182 functions as the Schiff-base intermediate with substrate; via pyruvic acid in the catalytic mechanism. Position 182 is a pyruvic acid (Ser); by autocatalysis (serine 182).

This sequence belongs to the phosphatidylserine decarboxylase family. PSD-A subfamily. In terms of assembly, heterodimer of a large membrane-associated beta subunit and a small pyruvoyl-containing alpha subunit. Requires pyruvate as cofactor. Is synthesized initially as an inactive proenzyme. Formation of the active enzyme involves a self-maturation process in which the active site pyruvoyl group is generated from an internal serine residue via an autocatalytic post-translational modification. Two non-identical subunits are generated from the proenzyme in this reaction, and the pyruvate is formed at the N-terminus of the alpha chain, which is derived from the carboxyl end of the proenzyme. The post-translation cleavage follows an unusual pathway, termed non-hydrolytic serinolysis, in which the side chain hydroxyl group of the serine supplies its oxygen atom to form the C-terminus of the beta chain, while the remainder of the serine residue undergoes an oxidative deamination to produce ammonia and the pyruvoyl prosthetic group on the alpha chain.

It localises to the cell membrane. It carries out the reaction a 1,2-diacyl-sn-glycero-3-phospho-L-serine + H(+) = a 1,2-diacyl-sn-glycero-3-phosphoethanolamine + CO2. It participates in phospholipid metabolism; phosphatidylethanolamine biosynthesis; phosphatidylethanolamine from CDP-diacylglycerol: step 2/2. In terms of biological role, catalyzes the formation of phosphatidylethanolamine (PtdEtn) from phosphatidylserine (PtdSer). This is Phosphatidylserine decarboxylase proenzyme from Solidesulfovibrio magneticus (strain ATCC 700980 / DSM 13731 / RS-1) (Desulfovibrio magneticus).